The sequence spans 98 residues: Large ribosomal subunit protein bL28 (98 aa).

Belongs to the bacterial ribosomal protein bL28 family.

In Phenylobacterium zucineum (strain HLK1), this protein is Large ribosomal subunit protein bL28.